The sequence spans 1017 residues: DNA polymerase (1017 aa).

The protein belongs to the DNA polymerase type-B family. Heterodimer with the terminal protein; this heterodimer binds to bp 9 to 18 of the genome. Forms a complex with viral pTP, DBP and hosts NFIA and POU2F1/OCT1 for initiation of replication.

The protein resides in the host nucleus. It carries out the reaction DNA(n) + a 2'-deoxyribonucleoside 5'-triphosphate = DNA(n+1) + diphosphate. Eukaryotic-type DNA polymerase involved in viral genomic replication. DNA synthesis is protein primed, and acts in a strand displacement replication. Assembles in complex with viral pTP, DBP, host NFIA and host POU2F1/OCT1 on viral origin of replication. The polymerase covalently transfers dCMP onto pTP, thereby initiating complementary strand synthesis. In Bovine adenovirus 2 (BAdV-2), this protein is DNA polymerase.